The following is an 80-amino-acid chain: Cell division activator CedA (80 aa).

This sequence belongs to the CedA family.

In terms of biological role, activates the cell division inhibited by chromosomal DNA over-replication. This chain is Cell division activator CedA, found in Escherichia coli O1:K1 / APEC.